The sequence spans 542 residues: 1-aminocyclopropane-1-carboxylate synthase 6 (542 aa).

The interval 1–28 is disordered; it reads MRRSGNGGAAKKKKKRSASAASERRPRA. Lys379 is modified (N6-(pyridoxal phosphate)lysine).

It belongs to the class-I pyridoxal-phosphate-dependent aminotransferase family. Pyridoxal 5'-phosphate serves as cofactor. In terms of tissue distribution, expressed in leaves.

Its subcellular location is the plastid. It is found in the amyloplast membrane. It catalyses the reaction S-adenosyl-L-methionine = 1-aminocyclopropane-1-carboxylate + S-methyl-5'-thioadenosine + H(+). The protein operates within alkene biosynthesis; ethylene biosynthesis via S-adenosyl-L-methionine; ethylene from S-adenosyl-L-methionine: step 1/2. Its function is as follows. Catalyzes the formation of 1-aminocyclopropane-1-carboxylate, a direct precursor of ethylene in higher plants. Required for the regulation of starch grain size in endosperm. This chain is 1-aminocyclopropane-1-carboxylate synthase 6, found in Oryza sativa subsp. japonica (Rice).